Here is a 148-residue protein sequence, read N- to C-terminus: Transcriptional regulator MraZ (148 aa).

SpoVT-AbrB domains lie at 5-53 (ETAI…AESE) and 82-125 (AAHL…SEQA).

It belongs to the MraZ family. As to quaternary structure, forms oligomers.

The protein resides in the cytoplasm. The protein localises to the nucleoid. The protein is Transcriptional regulator MraZ of Stenotrophomonas maltophilia (strain R551-3).